A 93-amino-acid chain; its full sequence is Small ribosomal subunit protein uS19 (93 aa).

It belongs to the universal ribosomal protein uS19 family.

Its function is as follows. Protein S19 forms a complex with S13 that binds strongly to the 16S ribosomal RNA. The protein is Small ribosomal subunit protein uS19 of Parafrankia sp. (strain EAN1pec).